Here is a 127-residue protein sequence, read N- to C-terminus: MLPAGCWNDTSRDGPGFRKMKGPKVEIGGYKFPISLGAENESTSRCDTAFSFLVGKERRSPSEPNRPMKNKRRAKPNGEAHAEQARRKISVEEKQPSSFPSHPGPKAVQSFLAKSRIWGFLLRYLTI.

Disordered regions lie at residues 1–22 (MLPA…KMKG) and 53–106 (LVGK…PGPK). A compositionally biased stretch (basic and acidic residues) spans 76–95 (PNGEAHAEQARRKISVEEKQ).

The protein resides in the mitochondrion. This is an uncharacterized protein from Arabidopsis thaliana (Mouse-ear cress).